A 252-amino-acid chain; its full sequence is 5'-nucleotidase SurE (252 aa).

The a divalent metal cation site is built by D8, D9, S40, and N93.

This sequence belongs to the SurE nucleotidase family. Requires a divalent metal cation as cofactor.

It is found in the cytoplasm. It catalyses the reaction a ribonucleoside 5'-phosphate + H2O = a ribonucleoside + phosphate. Its function is as follows. Nucleotidase that shows phosphatase activity on nucleoside 5'-monophosphates. This Methylocella silvestris (strain DSM 15510 / CIP 108128 / LMG 27833 / NCIMB 13906 / BL2) protein is 5'-nucleotidase SurE.